The chain runs to 580 residues: MDEELPDAVVFKDQNFSSDLLRQLNGLRQSKILTDVSICSGACEVPCHRNVLASSSPYFRAMFCSHFRESREAKVQLKGISSTTLEQVIAYVYTGEVHISAANVLPLMEAAAMLQYPRMFEACSSYLQSQLAPSNCLGLVRLAEILSCDSLKKKAREVALTYFPEVAASADLKELCVMELRDYLGDDKLCGEEEKVFEALMAWVKHDLQARWRYMQELLQQVRLQYIHPAFFHHFIASDALLQSSPACQAILEMAKKQIFSLYGPSAQDCKLWHTPPRSSYQDFLLLLGGRKDNQQTTRDVLLYSIQTGQWQSLAKLPTRLYKASAVTLHRSVYVLGGMAVREGKGLISCSVYIFSMKLNQWRMGEPMLAARYSHRSTTHRNFIFSIGGTGEGQELLGSMERYDSIRDVWESMADMPMAVLHPAVAVKDQRLYLFGGEDIMQNPVRLIQVYHISRNTWYKMETRMIKNVCAPAVVLGEKIIIVGGYTRRILAYDPQSNKFVKCADMKDRRMHHGATVMGNKLYVTGGRRLTTDCNIEDSASFDCYDPETDTWTSQGQLPHTLFDHACLTLQCIPHMTSLS.

In terms of domain architecture, BTB spans 34 to 101 (TDVSICSGAC…VYTGEVHISA (68 aa)). Residues 136 to 237 (CLGLVRLAEI…HPAFFHHFIA (102 aa)) form the BACK domain. 6 Kelch repeats span residues 284–331 (FLLL…TLHR), 333–382 (VYVL…THRN), 383–430 (FIFS…VKDQ), 432–478 (LYLF…VLGE), 479–520 (KIII…VMGN), and 522–572 (LYVT…TLQC).

This Rattus norvegicus (Rat) protein is Kelch-like protein 38 (Klhl38).